We begin with the raw amino-acid sequence, 242 residues long: Large ribosomal subunit protein uL3 (242 aa).

Residues 131–165 are disordered; that stretch reads GRATHGNSVSHRTHGSTGQRQDPGKVFKGKKMAGH. Residues 135 to 150 are compositionally biased toward polar residues; that stretch reads HGNSVSHRTHGSTGQR. Position 151 is an N5-methylglutamine (Gln-151).

It belongs to the universal ribosomal protein uL3 family. As to quaternary structure, part of the 50S ribosomal subunit. Forms a cluster with proteins L14 and L19. Methylated by PrmB.

In terms of biological role, one of the primary rRNA binding proteins, it binds directly near the 3'-end of the 23S rRNA, where it nucleates assembly of the 50S subunit. This is Large ribosomal subunit protein uL3 from Chelativorans sp. (strain BNC1).